Consider the following 391-residue polypeptide: Ammonium transporter Amt1 (391 aa).

Helical transmembrane passes span 12–32, 51–71, 88–108, 112–132, 152–172, 192–212, 223–243, 261–281, 305–325, and 338–358; these read VFFF…FIAL, LDLA…SYGF, AWWM…TGGV, IKIL…YPIV, AGSG…AYVL, IPIA…FNIG, LASV…GGAL, VAVC…VGLL, IGPV…IPFL, and GQII…LIIY.

This sequence belongs to the ammonia transporter channel (TC 1.A.11.2) family. As to quaternary structure, homotrimer. Interacts and forms a complex with GlnK1.

It is found in the cell membrane. Activity is regulated by the nitrogen regulatory protein GlnK1 via direct interaction. Formation of the GlnK1/Amt1 complex is decreased in the presence of Mg-ATP or 2-oxoglutarate. The presence of both effectors abolishes the formation of the complex. In terms of biological role, involved in the uptake of ammonium/ammonia (NH(4)(+)/NH(3)). Transport is electrogenic. The protein is Ammonium transporter Amt1 of Methanocaldococcus jannaschii (strain ATCC 43067 / DSM 2661 / JAL-1 / JCM 10045 / NBRC 100440) (Methanococcus jannaschii).